Here is a 539-residue protein sequence, read N- to C-terminus: Chaperonin GroEL (539 aa).

Residues 29–32 (TLGP), 86–90 (DGTTT), glycine 413, and aspartate 492 contribute to the ATP site.

Belongs to the chaperonin (HSP60) family. As to quaternary structure, forms a cylinder of 14 subunits composed of two heptameric rings stacked back-to-back. Interacts with the co-chaperonin GroES.

The protein resides in the cytoplasm. It carries out the reaction ATP + H2O + a folded polypeptide = ADP + phosphate + an unfolded polypeptide.. Functionally, together with its co-chaperonin GroES, plays an essential role in assisting protein folding. The GroEL-GroES system forms a nano-cage that allows encapsulation of the non-native substrate proteins and provides a physical environment optimized to promote and accelerate protein folding. In Fusobacterium nucleatum subsp. polymorphum (Fusobacterium polymorphum), this protein is Chaperonin GroEL.